The following is a 66-amino-acid chain: Large ribosomal subunit protein uL29 (66 aa).

This sequence belongs to the universal ribosomal protein uL29 family.

This Deinococcus deserti (strain DSM 17065 / CIP 109153 / LMG 22923 / VCD115) protein is Large ribosomal subunit protein uL29.